Here is a 480-residue protein sequence, read N- to C-terminus: Ribosomal protein uS12 methylthiotransferase RimO (480 aa).

One can recognise an MTTase N-terminal domain in the interval 37 to 147; that stretch reads NRIGFVSLGC…VLKHVHKYVP (111 aa). The [4Fe-4S] cluster site is built by C46, C82, C111, C179, C183, and C186. The Radical SAM core domain maps to 165–402; sequence LTPKHYAYLK…MEVQAEISAE (238 aa). A TRAM domain is found at 405 to 471; that stretch reads ARFVGRTMDI…EHDLWAELVD (67 aa).

This sequence belongs to the methylthiotransferase family. RimO subfamily. The cofactor is [4Fe-4S] cluster.

The protein resides in the cytoplasm. It carries out the reaction L-aspartate(89)-[ribosomal protein uS12]-hydrogen + (sulfur carrier)-SH + AH2 + 2 S-adenosyl-L-methionine = 3-methylsulfanyl-L-aspartate(89)-[ribosomal protein uS12]-hydrogen + (sulfur carrier)-H + 5'-deoxyadenosine + L-methionine + A + S-adenosyl-L-homocysteine + 2 H(+). Catalyzes the methylthiolation of an aspartic acid residue of ribosomal protein uS12. The protein is Ribosomal protein uS12 methylthiotransferase RimO of Shewanella sp. (strain ANA-3).